The following is an 89-amino-acid chain: Small ribosomal subunit protein uS15 (89 aa).

This sequence belongs to the universal ribosomal protein uS15 family. Part of the 30S ribosomal subunit. Forms a bridge to the 50S subunit in the 70S ribosome, contacting the 23S rRNA.

Its function is as follows. One of the primary rRNA binding proteins, it binds directly to 16S rRNA where it helps nucleate assembly of the platform of the 30S subunit by binding and bridging several RNA helices of the 16S rRNA. In terms of biological role, forms an intersubunit bridge (bridge B4) with the 23S rRNA of the 50S subunit in the ribosome. In Thermomicrobium roseum (strain ATCC 27502 / DSM 5159 / P-2), this protein is Small ribosomal subunit protein uS15.